The following is a 226-amino-acid chain: 2,3-bisphosphoglycerate-dependent phosphoglycerate mutase (226 aa).

Substrate-binding positions include 8 to 15, 21 to 22, R58, 109 to 112, K120, 136 to 137, and 180 to 181; these read RHGQSVWN, TG, ERMY, RR, and GN. H9 functions as the Tele-phosphohistidine intermediate in the catalytic mechanism. E109 acts as the Proton donor/acceptor in catalysis.

The protein belongs to the phosphoglycerate mutase family. BPG-dependent PGAM subfamily.

The catalysed reaction is (2R)-2-phosphoglycerate = (2R)-3-phosphoglycerate. Its pathway is carbohydrate degradation; glycolysis; pyruvate from D-glyceraldehyde 3-phosphate: step 3/5. Catalyzes the interconversion of 2-phosphoglycerate and 3-phosphoglycerate. This chain is 2,3-bisphosphoglycerate-dependent phosphoglycerate mutase, found in Chlamydia muridarum (strain MoPn / Nigg).